The following is a 486-amino-acid chain: Glutamate--tRNA ligase 2 (486 aa).

A 'HIGH' region motif is present at residues Pro12 to Asn22. Positions Lys252–Arg256 match the 'KMSKS' region motif. Lys255 contributes to the ATP binding site.

It belongs to the class-I aminoacyl-tRNA synthetase family. Glutamate--tRNA ligase type 1 subfamily. Monomer.

It localises to the cytoplasm. It catalyses the reaction tRNA(Glu) + L-glutamate + ATP = L-glutamyl-tRNA(Glu) + AMP + diphosphate. In terms of biological role, catalyzes the attachment of glutamate to tRNA(Glu) in a two-step reaction: glutamate is first activated by ATP to form Glu-AMP and then transferred to the acceptor end of tRNA(Glu). This Syntrophus aciditrophicus (strain SB) protein is Glutamate--tRNA ligase 2.